A 174-amino-acid chain; its full sequence is RNA pyrophosphohydrolase (174 aa).

Residues 6–150 (GFRPNVGIVI…KREVYRRVMK (145 aa)) enclose the Nudix hydrolase domain. The Nudix box signature appears at 38–59 (GGVDDGETPEQAMFRELYEEIG).

The protein belongs to the Nudix hydrolase family. RppH subfamily. Requires a divalent metal cation as cofactor.

Functionally, accelerates the degradation of transcripts by removing pyrophosphate from the 5'-end of triphosphorylated RNA, leading to a more labile monophosphorylated state that can stimulate subsequent ribonuclease cleavage. This chain is RNA pyrophosphohydrolase, found in Tolumonas auensis (strain DSM 9187 / NBRC 110442 / TA 4).